The primary structure comprises 397 residues: Putative 8-amino-7-oxononanoate synthase (397 aa).

Arginine 22 provides a ligand contact to substrate. 109 to 110 (GW) contacts pyridoxal 5'-phosphate. Histidine 139 provides a ligand contact to substrate. Pyridoxal 5'-phosphate contacts are provided by residues serine 187, 212-215 (DEAH), and 241-244 (TFSK). Lysine 244 is subject to N6-(pyridoxal phosphate)lysine. Substrate is bound at residue threonine 358.

This sequence belongs to the class-II pyridoxal-phosphate-dependent aminotransferase family. BioF subfamily. In terms of assembly, homodimer. Pyridoxal 5'-phosphate serves as cofactor.

The enzyme catalyses 6-carboxyhexanoyl-[ACP] + L-alanine + H(+) = (8S)-8-amino-7-oxononanoate + holo-[ACP] + CO2. It participates in cofactor biosynthesis; biotin biosynthesis. Catalyzes the decarboxylative condensation of pimeloyl-[acyl-carrier protein] and L-alanine to produce 8-amino-7-oxononanoate (AON), [acyl-carrier protein], and carbon dioxide. The polypeptide is Putative 8-amino-7-oxononanoate synthase (bioF) (Bordetella parapertussis (strain 12822 / ATCC BAA-587 / NCTC 13253)).